The chain runs to 1734 residues: Gag-Pol polyprotein (1734 aa).

Residue glycine 2 is the site of N-myristoyl glycine; by host attachment. Residues 107 to 217 are disordered; the sequence is PSPTAPILPS…STTSRAFPLR (111 aa). A PTAP/PSAP motif motif is present at residues 109–112; that stretch reads PTAP. Positions 128–132 match the LYPX(n)L motif motif; that stretch reads LYPAL. The short motif at 161 to 164 is the PPXY motif element; it reads PPPY. The residue at position 191 (serine 191) is a Phosphoserine; by host. Residues 344-392 are interaction with host PIAS4; it reads GRSPTNLAKVKGITQGPNESPSAFLERLKEAYRRYTPYDPEDPGQETNV. The segment at 429-434 is interaction with host UBE2I; sequence IFNKRE. Composition is skewed to basic and acidic residues over residues 434-465 and 485-498; these read ETPE…EKER and RQDR…RPQL. Disordered regions lie at residues 434–498 and 512–552; these read ETPE…RPQL and WAKD…PRIT. Residues 437–478 are a coiled coil; that stretch reads EEREERVRRETEEKEERRRAEEEQKEKERDRRRHREMSKLLA. A CCHC-type zinc finger spans residues 501-518; sequence DQCAYCKEKGHWAKDCPK. Positions 560-630 constitute a Peptidase A2 domain; it reads VTFLVDTGAQ…CPYPLLGRDL (71 aa). Aspartate 565 serves as the catalytic Protease; shared with dimeric partner. A Reverse transcriptase domain is found at 740–931; that stretch reads LDQGILVPCQ…KQVKYLGYLL (192 aa). Aspartate 808, aspartate 882, aspartate 883, aspartate 1182, glutamate 1220, aspartate 1241, and aspartate 1311 together coordinate Mg(2+). Residues 1173-1319 form the RNase H type-1 domain; the sequence is PDADHTWYTD…ADQAAREAAI (147 aa). An HHCC-type zinc finger spans residues 1386-1426; that stretch reads HRLTHLGYQKMKALLDRGESPYYMLNRDKTLQYVADSCTVC. The 159-residue stretch at 1443–1601 folds into the Integrase catalytic domain; that stretch reads RGHRPGSHWE…TPYEILYGAP (159 aa). Mg(2+)-binding residues include aspartate 1454 and aspartate 1513.

It belongs to the retroviral Pol polyprotein family. Homohexamer; further associates as homomultimer. The virus core is composed of a lattice formed from hexagonal rings, each containing six capsid monomers. In terms of assembly, interacts (via PPXY motif) with host NEDD4. Interacts (via PSAP motif) with host TSG101. Interacts (via LYPX(n)L motif) with host PDCD6IP. As to quaternary structure, the reverse transcriptase is a monomer (Potential). Interacts (via RNase domains) with host release factor ETF1; this interaction is essential for translational readthrough of amber codon between viral gag and pol genes, as well as for viral replication. Homodimer. It depends on Mg(2+) as a cofactor. Ubiquitinated by ITCH. Gag can recruit the ubiquitin ligase Itch in an L domain-independent manner to facilitate virus release via a mechanism that involves Gag ubiquitination. In terms of processing, specific enzymatic cleavages by the viral protease yield mature proteins. The protease is released by autocatalytic cleavage. The polyprotein is cleaved during and after budding, this process is termed maturation. Post-translationally, sumoylated; which is required for virus replication. Phosphorylated on serine residues.

The protein resides in the virion. Its subcellular location is the host cell membrane. It localises to the host late endosome membrane. The protein localises to the host endosome. It is found in the host multivesicular body. The protein resides in the host cytoplasm. It carries out the reaction DNA(n) + a 2'-deoxyribonucleoside 5'-triphosphate = DNA(n+1) + diphosphate. The catalysed reaction is Endonucleolytic cleavage to 5'-phosphomonoester.. Most efficiently inhibited by Amprenavir, which is able to block Gag-Pol processing in infected cells. Plays a role in budding and is processed by the viral protease during virion maturation outside the cell. During budding, it recruits, in a PPXY-dependent or independent manner, Nedd4-like ubiquitin ligases that conjugate ubiquitin molecules to Gag-Pol, or to Gag-Pol binding host factors. Interaction with HECT ubiquitin ligases probably link the viral protein to the host ESCRT pathway and facilitates release. In terms of biological role, targets Gag and gag-pol polyproteins to the plasma membrane via a multipartite membrane binding signal, that includes its myristoylated N-terminus. Also mediates nuclear localization of the pre-integration complex. Its function is as follows. Constituent of the pre-integration complex (PIC) which tethers the latter to mitotic chromosomes. This allows the integration of the viral genome into the host DNA. Functionally, forms the spherical core of the virion that encapsulates the genomic RNA-nucleocapsid complex. Involved in the packaging and encapsidation of two copies of the genome. Binds with high affinity to conserved UCUG elements within the packaging signal, located near the 5'-end of the genome. This binding is dependent on genome dimerization. Acts as a nucleic acid chaperone which is involved in rearrangement of nucleic acid secondary structures during gRNA retrotranscription. In terms of biological role, the aspartyl protease mediates proteolytic cleavages of Gag and Gag-Pol polyproteins during or shortly after the release of the virion from the plasma membrane. Cleavages take place as an ordered, step-wise cascade to yield mature proteins. This process is called maturation. Displays maximal activity during the budding process just prior to particle release from the cell (Potential). Cleaves the translation initiation factor eIF4G leading to the inhibition of host cap-dependent translation. Its function is as follows. RT is a multifunctional enzyme that converts the viral dimeric RNA genome into dsDNA in the cytoplasm, shortly after virus entry into the cell. This enzyme displays a DNA polymerase activity that can copy either DNA or RNA templates, and a ribonuclease H (RNase H) activity that cleaves the RNA strand of RNA-DNA heteroduplexes in a partially processive 3' to 5' endonucleasic mode. Conversion of viral genomic RNA into dsDNA requires many steps. A tRNA binds to the primer-binding site (PBS) situated at the 5' end of the viral RNA. RT uses the 3' end of the tRNA primer to perform a short round of RNA-dependent minus-strand DNA synthesis. The reading proceeds through the U5 region and ends after the repeated (R) region which is present at both ends of viral RNA. The portion of the RNA-DNA heteroduplex is digested by the RNase H, resulting in a ssDNA product attached to the tRNA primer. This ssDNA/tRNA hybridizes with the identical R region situated at the 3' end of viral RNA. This template exchange, known as minus-strand DNA strong stop transfer, can be either intra- or intermolecular. RT uses the 3' end of this newly synthesized short ssDNA to perform the RNA-dependent minus-strand DNA synthesis of the whole template. RNase H digests the RNA template except for a polypurine tract (PPT) situated at the 5' end of the genome. It is not clear if both polymerase and RNase H activities are simultaneous. RNase H probably can proceed both in a polymerase-dependent (RNA cut into small fragments by the same RT performing DNA synthesis) and a polymerase-independent mode (cleavage of remaining RNA fragments by free RTs). Secondly, RT performs DNA-directed plus-strand DNA synthesis using the PPT that has not been removed by RNase H as primers. PPT and tRNA primers are then removed by RNase H. The 3' and 5' ssDNA PBS regions hybridize to form a circular dsDNA intermediate. Strand displacement synthesis by RT to the PBS and PPT ends produces a blunt ended, linear dsDNA copy of the viral genome that includes long terminal repeats (LTRs) at both ends. Functionally, catalyzes viral DNA integration into the host chromosome, by performing a series of DNA cutting and joining reactions. This enzyme activity takes place after virion entry into a cell and reverse transcription of the RNA genome in dsDNA. The first step in the integration process is 3' processing. This step requires a complex comprising the viral genome, matrix protein and integrase. This complex is called the pre-integration complex (PIC). The integrase protein removes 2 nucleotides from each 3' end of the viral DNA, leaving recessed CA OH's at the 3' ends. In the second step that requires cell division, the PIC enters cell nucleus. In the third step, termed strand transfer, the integrase protein joins the previously processed 3' ends to the 5' ends of strands of target cellular DNA at the site of integration. The last step is viral DNA integration into host chromosome. This AKV murine leukemia virus (AKR (endogenous) murine leukemia virus) protein is Gag-Pol polyprotein (pol).